The primary structure comprises 668 residues: UvrABC system protein B (668 aa).

One can recognise a Helicase ATP-binding domain in the interval 25 to 176; it reads THLQSGHSRQ…DQRQLLRNLA (152 aa). 38–45 is an ATP binding site; that stretch reads GATGTGKT. A Beta-hairpin motif is present at residues 91-114; it reads YYDYYQPEAYIPVTDTFIEKTASI. The Helicase C-terminal domain maps to 429-591; sequence QVDDLLAEIQ…ITPQPVKKGS (163 aa). The UVR domain maps to 626–661; it reads PELITQLEAQMKEAAKNLEFEEAAKYRDRIKNLRSK.

The protein belongs to the UvrB family. In terms of assembly, forms a heterotetramer with UvrA during the search for lesions. Interacts with UvrC in an incision complex.

It is found in the cytoplasm. Its function is as follows. The UvrABC repair system catalyzes the recognition and processing of DNA lesions. A damage recognition complex composed of 2 UvrA and 2 UvrB subunits scans DNA for abnormalities. Upon binding of the UvrA(2)B(2) complex to a putative damaged site, the DNA wraps around one UvrB monomer. DNA wrap is dependent on ATP binding by UvrB and probably causes local melting of the DNA helix, facilitating insertion of UvrB beta-hairpin between the DNA strands. Then UvrB probes one DNA strand for the presence of a lesion. If a lesion is found the UvrA subunits dissociate and the UvrB-DNA preincision complex is formed. This complex is subsequently bound by UvrC and the second UvrB is released. If no lesion is found, the DNA wraps around the other UvrB subunit that will check the other stand for damage. In Acaryochloris marina (strain MBIC 11017), this protein is UvrABC system protein B.